Here is a 140-residue protein sequence, read N- to C-terminus: Large-conductance mechanosensitive channel (140 aa).

2 helical membrane passes run 21-41 and 82-102; these read VGVI…GDVI and GSFI…FMMI.

The protein belongs to the MscL family. In terms of assembly, homopentamer.

The protein resides in the cell inner membrane. Its function is as follows. Channel that opens in response to stretch forces in the membrane lipid bilayer. May participate in the regulation of osmotic pressure changes within the cell. The sequence is that of Large-conductance mechanosensitive channel from Leptothrix cholodnii (strain ATCC 51168 / LMG 8142 / SP-6) (Leptothrix discophora (strain SP-6)).